The primary structure comprises 376 residues: Glucose-1-phosphate adenylyltransferase (376 aa).

Residues Y101, G166, E181–K182, and S192 each bind alpha-D-glucose 1-phosphate.

Belongs to the bacterial/plant glucose-1-phosphate adenylyltransferase family. As to quaternary structure, homotetramer.

The enzyme catalyses alpha-D-glucose 1-phosphate + ATP + H(+) = ADP-alpha-D-glucose + diphosphate. It functions in the pathway glycan biosynthesis; glycogen biosynthesis. Functionally, involved in the biosynthesis of ADP-glucose, a building block required for the elongation reactions to produce glycogen. Catalyzes the reaction between ATP and alpha-D-glucose 1-phosphate (G1P) to produce pyrophosphate and ADP-Glc. This is Glucose-1-phosphate adenylyltransferase from Bacillus cereus (strain ZK / E33L).